The sequence spans 603 residues: Myotubularin (603 aa).

Phosphoserine occurs at positions 13 and 18. Residues 29–97 (QDVSETVPRL…GVISRIEKMG (69 aa)) form the GRAM domain. The Myotubularin phosphatase domain maps to 163–538 (GWTVYNPVEE…RHLELWVNYY (376 aa)). A 1,2-diacyl-sn-glycero-3-phospho-(1D-myo-inositol-3,5-bisphosphate) is bound by residues Asn-288, Asn-313, and Ile-314. Asn-288, Asn-313, and Ile-314 together coordinate a 1,2-diacyl-sn-glycero-3-phospho-(1D-myo-inositol-3-phosphate). Cys-375 acts as the Phosphocysteine intermediate in catalysis. A 1,2-diacyl-sn-glycero-3-phospho-(1D-myo-inositol-3,5-bisphosphate) is bound by residues Ser-376, Asp-377, Gly-378, Trp-379, Asp-380, Arg-381, Lys-417, and Arg-421. A 1,2-diacyl-sn-glycero-3-phospho-(1D-myo-inositol-3-phosphate) is bound by residues Ser-376, Asp-377, Gly-378, Trp-379, Asp-380, and Arg-381. Arg-421 is an a 1,2-diacyl-sn-glycero-3-phospho-(1D-myo-inositol-3-phosphate) binding site. Residue Thr-495 is modified to Phosphothreonine. Phosphoserine is present on Ser-588.

This sequence belongs to the protein-tyrosine phosphatase family. Non-receptor class myotubularin subfamily. In terms of assembly, heterodimer with MTMR12. Interacts with KMT2A/MLL1 (via SET domain). Interacts with DES in skeletal muscle but not in cardiac muscle. Interacts with SPEG. In terms of tissue distribution, widely expressed with highest levels detected in heart and muscle and low levels in brain (at protein level). Expressed in skeletal muscles (at protein level).

Its subcellular location is the cytoplasm. It is found in the cell membrane. The protein localises to the cell projection. The protein resides in the filopodium. It localises to the ruffle. Its subcellular location is the late endosome. It is found in the myofibril. The protein localises to the sarcomere. It catalyses the reaction a 1,2-diacyl-sn-glycero-3-phospho-(1D-myo-inositol-3-phosphate) + H2O = a 1,2-diacyl-sn-glycero-3-phospho-(1D-myo-inositol) + phosphate. The catalysed reaction is a 1,2-diacyl-sn-glycero-3-phospho-(1D-myo-inositol-3,5-bisphosphate) + H2O = a 1,2-diacyl-sn-glycero-3-phospho-(1D-myo-inositol-5-phosphate) + phosphate. The enzyme catalyses 1,2-dioctanoyl-sn-glycero-3-phospho-(1-D-myo-inositol-3-phosphate) + H2O = 1,2-dioctanoyl-sn-glycero-3-phospho-(1D-myo-inositol) + phosphate. It carries out the reaction 1,2-dioctanoyl-sn-glycero-3-phospho-(1D-myo-inositol-3,5-bisphosphate) + H2O = 1,2-dioctanoyl-sn-glycero-3-phospho-(1D-myo-inositol-5-phosphate) + phosphate. It catalyses the reaction 1,2-dihexadecanoyl-sn-glycero-3-phospho-(1D-myo-inositol-3,5-phosphate) + H2O = 1,2-dihexadecanoyl-sn-glycero-3-phospho-(1D-myo-inositol-5-phosphate) + phosphate. With respect to regulation, allosterically activated by phosphatidylinositol 5-phosphate (PI5P). In terms of biological role, lipid phosphatase which dephosphorylates phosphatidylinositol 3-monophosphate (PI3P) and phosphatidylinositol 3,5-bisphosphate (PI(3,5)P2). Has also been shown to dephosphorylate phosphotyrosine- and phosphoserine-containing peptides. Negatively regulates EGFR degradation through regulation of EGFR trafficking from the late endosome to the lysosome. Plays a role in vacuolar formation and morphology. Regulates desmin intermediate filament assembly and architecture. Plays a role in mitochondrial morphology and positioning. Required for skeletal muscle maintenance but not for myogenesis. In skeletal muscles, stabilizes MTMR12 protein levels. This is Myotubularin from Mus musculus (Mouse).